We begin with the raw amino-acid sequence, 787 residues long: DNA ligase (787 aa).

NAD(+) contacts are provided by residues 32–36, 81–82, and glutamate 121; these read DVEYD and SL. Lysine 123 functions as the N6-AMP-lysine intermediate in the catalytic mechanism. 4 residues coordinate NAD(+): arginine 144, glutamate 181, lysine 297, and lysine 321. The Zn(2+) site is built by cysteine 415, cysteine 418, cysteine 445, and cysteine 451. The 85-residue stretch at 703-787 folds into the BRCT domain; that stretch reads VEGLPLAGQT…RLTELGVAVD (85 aa).

It belongs to the NAD-dependent DNA ligase family. LigA subfamily. It depends on Mg(2+) as a cofactor. Mn(2+) is required as a cofactor.

It catalyses the reaction NAD(+) + (deoxyribonucleotide)n-3'-hydroxyl + 5'-phospho-(deoxyribonucleotide)m = (deoxyribonucleotide)n+m + AMP + beta-nicotinamide D-nucleotide.. DNA ligase that catalyzes the formation of phosphodiester linkages between 5'-phosphoryl and 3'-hydroxyl groups in double-stranded DNA using NAD as a coenzyme and as the energy source for the reaction. It is essential for DNA replication and repair of damaged DNA. The protein is DNA ligase of Pseudomonas savastanoi pv. phaseolicola (strain 1448A / Race 6) (Pseudomonas syringae pv. phaseolicola (strain 1448A / Race 6)).